Consider the following 195-residue polypeptide: Imidazoleglycerol-phosphate dehydratase (195 aa).

The protein belongs to the imidazoleglycerol-phosphate dehydratase family.

Its subcellular location is the cytoplasm. It catalyses the reaction D-erythro-1-(imidazol-4-yl)glycerol 3-phosphate = 3-(imidazol-4-yl)-2-oxopropyl phosphate + H2O. It functions in the pathway amino-acid biosynthesis; L-histidine biosynthesis; L-histidine from 5-phospho-alpha-D-ribose 1-diphosphate: step 6/9. The sequence is that of Imidazoleglycerol-phosphate dehydratase from Burkholderia cenocepacia (strain HI2424).